The chain runs to 358 residues: Peptide chain release factor 1 (358 aa).

Position 233 is an N5-methylglutamine (Gln233).

Belongs to the prokaryotic/mitochondrial release factor family. Methylated by PrmC. Methylation increases the termination efficiency of RF1.

It is found in the cytoplasm. Functionally, peptide chain release factor 1 directs the termination of translation in response to the peptide chain termination codons UAG and UAA. This chain is Peptide chain release factor 1, found in Staphylococcus carnosus (strain TM300).